Reading from the N-terminus, the 75-residue chain is uncharacterized protein (75 aa).

This is an uncharacterized protein from Escherichia coli O6:H1 (strain CFT073 / ATCC 700928 / UPEC).